The chain runs to 155 residues: Ribonuclease H (155 aa).

One can recognise an RNase H type-1 domain in the interval 4-145 (TEPTVYAYTD…ADRLANRGID (142 aa)). Mg(2+) is bound by residues Asp13, Glu51, Asp73, and Asp137.

This sequence belongs to the RNase H family. In terms of assembly, monomer. Mg(2+) is required as a cofactor.

The protein resides in the cytoplasm. It carries out the reaction Endonucleolytic cleavage to 5'-phosphomonoester.. Its function is as follows. Endonuclease that specifically degrades the RNA of RNA-DNA hybrids. This chain is Ribonuclease H, found in Methylococcus capsulatus (strain ATCC 33009 / NCIMB 11132 / Bath).